A 1544-amino-acid polypeptide reads, in one-letter code: Rho guanine nucleotide exchange factor 12 (1544 aa).

A disordered region spans residues 1-62 (MSGTQSTITD…KTKSSSEESR (62 aa)). Serine 2 is subject to N-acetylserine. The segment covering 28 to 45 (SPTDKKQKVERIASHDFD) has biased composition (basic and acidic residues). Serine 41 is subject to Phosphoserine. A PDZ domain is found at 72–151 (CVIIQKDDNG…LTVQGRPPGS (80 aa)). Residues 194-262 (MGEENNVVHN…LSKATGSAQD (69 aa)) adopt a coiled-coil conformation. The tract at residues 247 to 346 (PQLQEQLSKA…SLVGSPSTRI (100 aa)) is disordered. Composition is skewed to polar residues over residues 249-260 (LQEQLSKATGSA) and 293-309 (DCSSGDASRPSSDNADS). Serine 309 is subject to Phosphoserine. The span at 313 to 329 (GPKERIYLEENPEKSET) shows a compositional bias: basic and acidic residues. Residues 330-344 (IQDTDTQSLVGSPST) show a composition bias toward polar residues. Position 341 is a phosphoserine (serine 341). Residues 367 to 558 (GQCSCFQSIE…LMYMKHLGVK (192 aa)) form the RGSL domain. Residues 570–706 (GRIGFLPKIK…GDTLDGTPRT (137 aa)) form a disordered region. The span at 582 to 592 (MKKDKEGEEKG) shows a compositional bias: basic and acidic residues. Over residues 631–640 (STPSSVSPEP) the composition is skewed to polar residues. Serine 637 carries the post-translational modification Phosphoserine. Positions 663-676 (ANSMSSVASGASFS) are enriched in low complexity. Threonine 736 carries the post-translational modification Phosphothreonine. The 191-residue stretch at 787–977 (KRQEVINELF…RQILNYVNQA (191 aa)) folds into the DH domain. The PH domain maps to 1019 to 1132 (KMIHEGPLVW…WQDLICRMAA (114 aa)). Residues 1138–1149 (STKPIPLPQSTP) show a composition bias toward polar residues. The tract at residues 1138-1179 (STKPIPLPQSTPGEGDNDEEDPSKLKEEQHGISVTGLQSPDR) is disordered. Residues serine 1288, serine 1327, serine 1377, serine 1457, and serine 1541 each carry the phosphoserine modification.

As to quaternary structure, interacts with GNA12 and GNA13, probably through the RGS-like domain. Interacts with RHOA, PLXNB1 and PLXNB2. Interacts through its PDZ domain with IGF1R beta subunit. Interacts with GCSAM. Found in a complex with ARHGEF11 and ARHGEF12; binding to ARHGEF11 and ARHGEF12 enhances CDC42 GEF activity of PLEKHG4B, and PLEKHG4B, in turn, inhibits ARHGEF11- and ARHGEF12-mediated RHOA activation. Ubiquitously expressed. Isoform 2 is found in jejunum and testis.

The protein localises to the cytoplasm. Its subcellular location is the membrane. Functionally, may play a role in the regulation of RhoA GTPase by guanine nucleotide-binding alpha-12 (GNA12) and alpha-13 (GNA13). Acts as guanine nucleotide exchange factor (GEF) for RhoA GTPase and may act as GTPase-activating protein (GAP) for GNA12 and GNA13. The polypeptide is Rho guanine nucleotide exchange factor 12 (ARHGEF12) (Homo sapiens (Human)).